We begin with the raw amino-acid sequence, 445 residues long: Phosphoglucosamine mutase (445 aa).

Ser-102 functions as the Phosphoserine intermediate in the catalytic mechanism. Mg(2+)-binding residues include Ser-102, Asp-241, Asp-243, and Asp-245. Ser-102 is modified (phosphoserine).

It belongs to the phosphohexose mutase family. Mg(2+) is required as a cofactor. Activated by phosphorylation.

It carries out the reaction alpha-D-glucosamine 1-phosphate = D-glucosamine 6-phosphate. Its function is as follows. Catalyzes the conversion of glucosamine-6-phosphate to glucosamine-1-phosphate. The polypeptide is Phosphoglucosamine mutase (Shewanella piezotolerans (strain WP3 / JCM 13877)).